Here is a 397-residue protein sequence, read N- to C-terminus: Elongation factor Tu (397 aa).

Residues 10-206 (KPHVNIGTIG…AVDTYIPTPE (197 aa)) form the tr-type G domain. The segment at 19–26 (GHVDHGKT) is G1. 19–26 (GHVDHGKT) provides a ligand contact to GTP. Position 26 (Thr26) interacts with Mg(2+). Residues 60–64 (GITIN) form a G2 region. Positions 81–84 (DCPG) are G3. GTP-binding positions include 81–85 (DCPGH) and 136–139 (NKSD). The segment at 136-139 (NKSD) is G4. Residues 174–176 (SAL) form a G5 region.

The protein belongs to the TRAFAC class translation factor GTPase superfamily. Classic translation factor GTPase family. EF-Tu/EF-1A subfamily. In terms of assembly, monomer.

Its subcellular location is the cytoplasm. The enzyme catalyses GTP + H2O = GDP + phosphate + H(+). In terms of biological role, GTP hydrolase that promotes the GTP-dependent binding of aminoacyl-tRNA to the A-site of ribosomes during protein biosynthesis. This chain is Elongation factor Tu, found in Clostridium kluyveri (strain ATCC 8527 / DSM 555 / NBRC 12016 / NCIMB 10680 / K1).